The sequence spans 186 residues: UPF0149 protein Pfl01_5435 (186 aa).

The protein belongs to the UPF0149 family.

The protein is UPF0149 protein Pfl01_5435 of Pseudomonas fluorescens (strain Pf0-1).